We begin with the raw amino-acid sequence, 393 residues long: Methylthioribose kinase (393 aa).

Residues Asn-38, Lys-53, and 107–109 each bind ATP; that span reads EDL. Asp-225 contacts substrate. 242–244 is a binding site for ATP; sequence DPE. Residue Arg-332 participates in substrate binding.

It belongs to the methylthioribose kinase family. As to quaternary structure, homodimer.

It catalyses the reaction 5-(methylsulfanyl)-D-ribose + ATP = 5-(methylsulfanyl)-alpha-D-ribose 1-phosphate + ADP + H(+). Its pathway is amino-acid biosynthesis; L-methionine biosynthesis via salvage pathway; S-methyl-5-thio-alpha-D-ribose 1-phosphate from S-methyl-5'-thioadenosine (hydrolase route): step 2/2. Catalyzes the phosphorylation of methylthioribose into methylthioribose-1-phosphate. The protein is Methylthioribose kinase of Bacillus cereus (strain ATCC 14579 / DSM 31 / CCUG 7414 / JCM 2152 / NBRC 15305 / NCIMB 9373 / NCTC 2599 / NRRL B-3711).